The sequence spans 842 residues: Xyloglucanase Xgh74A (842 aa).

Residues 1 to 32 (MVKKFTSKIKAAVFAAVVAATAIFGPAISSQA) form the signal peptide. Aspartate 70 serves as the catalytic Nucleophile. BNR repeat units follow at residues 134–144 (RSTDRGETWEK), 185–196 (WRSTDYGVTWSK), 252–262 (YRSTDGGVTWK), and 358–368 (FRSTDGGATWK). Residue aspartate 480 is the Proton donor of the active site. BNR repeat units follow at residues 533 to 541 (FSYDGGRNW), 577 to 586 (VTTDNGNSWK), 616 to 626 (YISTDGGLTFT), 660 to 671 (WRSTDGGYTFEK), and 708 to 718 (FRSDDAGKTWV). The Dockerin domain occupies 771–841 (DKGLVGDLNG…LLQAIPELPK (71 aa)).

Belongs to the glycosyl hydrolase 74 family.

Hydrolyzes the glucosidic bonds of unbranched Glc residues in tamarind seed xyloglucan, producing XXXG, XLXG, XXLG and XLLG. Has low activity on carboxymethylcellulose, lichenan,hydroxyethylcellulose and glucuronoxylan, and no activity on xylan, polygalaturonic acid, wheat arabinoxylan, rhamnogalacturan, curdlan, laminarin, galactomannan, galactan, arabinan and pachyman or amorphous cellulose. The polypeptide is Xyloglucanase Xgh74A (Acetivibrio thermocellus (Hungateiclostridium thermocellum)).